We begin with the raw amino-acid sequence, 508 residues long: Cyclin-A1-1 (508 aa).

Low complexity predominate over residues 1-28 (MSSNLAASRRSSSSSSVAAAAAAKRPAV). Disordered stretches follow at residues 1 to 40 (MSSN…GKAA) and 82 to 125 (VKKG…ESVL). The span at 29–39 (GEGGGGGGGKA) shows a compositional bias: gly residues. Residues 98 to 111 (ASAVKSASAKPAPA) show a composition bias toward low complexity.

The protein belongs to the cyclin family. Cyclin AB subfamily. In terms of tissue distribution, expressed in the dividing region of the root cap and root apex. Expressed in the intercalary meristem of internodes and in adventitious roots under submergence conditions.

Involved in the control of the cell cycle at the G2/M (mitosis) transition. The polypeptide is Cyclin-A1-1 (CYCA1-1) (Oryza sativa subsp. japonica (Rice)).